Here is a 155-residue protein sequence, read N- to C-terminus: MAKGEGHILAQNKKARHDYHIVETVEAGIVLTGTEIKSVRAARIQLKDGFAQIKNGEAWLVNVHIAPFEQGNIWNADPERTRKLLLKKREITHLENELKGSGMTLVPLKVYLKDGFAKVLIGLAKGKHEYDKRETIKRRDQERDIKKQMKHYNAR.

The segment covering 135–147 (TIKRRDQERDIKK) has biased composition (basic and acidic residues). A disordered region spans residues 135–155 (TIKRRDQERDIKKQMKHYNAR).

Belongs to the SmpB family.

The protein localises to the cytoplasm. Its function is as follows. Required for rescue of stalled ribosomes mediated by trans-translation. Binds to transfer-messenger RNA (tmRNA), required for stable association of tmRNA with ribosomes. tmRNA and SmpB together mimic tRNA shape, replacing the anticodon stem-loop with SmpB. tmRNA is encoded by the ssrA gene; the 2 termini fold to resemble tRNA(Ala) and it encodes a 'tag peptide', a short internal open reading frame. During trans-translation Ala-aminoacylated tmRNA acts like a tRNA, entering the A-site of stalled ribosomes, displacing the stalled mRNA. The ribosome then switches to translate the ORF on the tmRNA; the nascent peptide is terminated with the 'tag peptide' encoded by the tmRNA and targeted for degradation. The ribosome is freed to recommence translation, which seems to be the essential function of trans-translation. In Streptococcus pyogenes serotype M3 (strain SSI-1), this protein is SsrA-binding protein.